The following is a 90-amino-acid chain: Small ribosomal subunit protein bS18B (90 aa).

This sequence belongs to the bacterial ribosomal protein bS18 family. As to quaternary structure, part of the 30S ribosomal subunit. Forms a tight heterodimer with protein bS6.

Its function is as follows. Binds as a heterodimer with protein bS6 to the central domain of the 16S rRNA, where it helps stabilize the platform of the 30S subunit. In Roseiflexus sp. (strain RS-1), this protein is Small ribosomal subunit protein bS18B.